Reading from the N-terminus, the 54-residue chain is uncharacterized protein (54 aa).

The signal sequence occupies residues 1–23 (MKELIFFLLIIVILFVVFMVVSS).

This is an uncharacterized protein from Acheta domesticus (House cricket).